A 270-amino-acid chain; its full sequence is Proteasome inhibitor PI31 subunit (270 aa).

The residue at position 2 (A2) is an N-acetylalanine. The segment at 2-150 (AGLEVLFASA…PIHEQWEKAN (149 aa)) is important for homodimerization and interaction with FBXO7. S152 carries the post-translational modification Phosphoserine. At R204 the chain carries Omega-N-methylarginine. R218 is modified (asymmetric dimethylarginine). The segment at 220-270 (LIDPSSGLPNRLPPGAVPPGARFDPFGPIGTSPSGPNPDHLPPPGYDDMYL) is disordered. R230 is subject to Omega-N-methylarginine. Position 251 is a phosphoserine (S251). Residues 254–264 (GPNPDHLPPPG) show a composition bias toward pro residues.

It belongs to the proteasome inhibitor PI31 family. Monomer and homodimer. Interacts with FBXO7.

The protein resides in the cytoplasm. Its subcellular location is the endoplasmic reticulum. In terms of biological role, plays an important role in control of proteasome function. Inhibits the hydrolysis of protein and peptide substrates by the 20S proteasome. Also inhibits the activation of the proteasome by the proteasome regulatory proteins PA700 and PA28. The polypeptide is Proteasome inhibitor PI31 subunit (PSMF1) (Bos taurus (Bovine)).